Reading from the N-terminus, the 312-residue chain is Cytochrome c biogenesis protein CcsA (312 aa).

The next 8 membrane-spanning stretches (helical) occupy residues 12–32 (NLVF…LSFF), 47–67 (IVAN…AGYF), 72–92 (LYES…YVEF), 98–118 (LVGA…NLTL), 144–164 (MMLS…FLVI), 220–240 (IIGL…VWAN), 254–271 (TWAL…HSRI), and 281–301 (AILG…VNFL).

This sequence belongs to the CcmF/CycK/Ccl1/NrfE/CcsA family. As to quaternary structure, may interact with Ccs1.

The protein resides in the plastid. It localises to the chloroplast thylakoid membrane. Its function is as follows. Required during biogenesis of c-type cytochromes (cytochrome c6 and cytochrome f) at the step of heme attachment. The polypeptide is Cytochrome c biogenesis protein CcsA (Trieres chinensis (Marine centric diatom)).